The chain runs to 326 residues: Protein ORF5 in retron Ec67 (326 aa).

The disordered stretch occupies residues 1-24 (MGKSKKNRAAATNQLKHKSQTSAE). Over residues 10 to 24 (AATNQLKHKSQTSAE) the composition is skewed to polar residues.

This sequence belongs to the phage portal family. PBSX subfamily.

The polypeptide is Protein ORF5 in retron Ec67 (Escherichia coli).